Consider the following 198-residue polypeptide: Superoxide dismutase [Mn], mitochondrial (198 aa).

Histidine 26 contacts Mn(2+). The residue at position 34 (tyrosine 34) is a 3'-nitrotyrosine. N6-acetyllysine; alternate occurs at positions 44 and 51. 2 positions are modified to N6-succinyllysine; alternate: lysine 44 and lysine 51. Position 74 (histidine 74) interacts with Mn(2+). Lysine 90 carries the N6-acetyllysine modification. 2 positions are modified to N6-acetyllysine; alternate: lysine 98 and lysine 106. Residues lysine 98 and lysine 106 each carry the N6-succinyllysine; alternate modification. Aspartate 159 and histidine 163 together coordinate Mn(2+). Lysine 178 bears the N6-acetyllysine mark.

The protein belongs to the iron/manganese superoxide dismutase family. In terms of assembly, homotetramer. Mn(2+) is required as a cofactor. Nitrated under oxidative stress. Nitration coupled with oxidation inhibits the catalytic activity. Post-translationally, acetylation at Lys-98 decreases enzymatic activity. Deacetylated by SIRT3 upon exposure to ionizing radiations or after long fasting. In terms of processing, polyubiquitinated; leading to proteasomal degradation. Deubiquitinated by USP36 which increases protein stability.

Its subcellular location is the mitochondrion matrix. The catalysed reaction is 2 superoxide + 2 H(+) = H2O2 + O2. Destroys superoxide anion radicals which are normally produced within the cells and which are toxic to biological systems. In Pan troglodytes (Chimpanzee), this protein is Superoxide dismutase [Mn], mitochondrial (SOD2).